A 1169-amino-acid chain; its full sequence is RecBCD enzyme subunit RecB (1169 aa).

Residues 1-436 form the UvrD-like helicase ATP-binding domain; it reads MNKILEKIQN…IVLKINHRSS (436 aa). The DNA-binding and helicase activity, interacts with RecC stretch occupies residues 1-839; that stretch reads MNKILEKIQN…LLEIAKIFTI (839 aa). 18-25 is an ATP binding site; sequence ASAGTGKT. The region spanning 459–746 is the UvrD-like helicase C-terminal domain; it reads IEKIDFTNSL…ELMTIHKSKG (288 aa). The segment at 883–1169 is nuclease activity, interacts with RecD and RecA; sequence KEYTSSFSSL…ILELGIKRHL (287 aa). Residues H939, D1052, and D1065 each contribute to the Mg(2+) site. Residue D1065 is the For nuclease activity of the active site.

It belongs to the helicase family. UvrD subfamily. As to quaternary structure, heterotrimer of RecB, RecC and RecD. All subunits contribute to DNA-binding. Interacts with RecA. It depends on Mg(2+) as a cofactor.

It carries out the reaction Exonucleolytic cleavage (in the presence of ATP) in either 5'- to 3'- or 3'- to 5'-direction to yield 5'-phosphooligonucleotides.. It catalyses the reaction Couples ATP hydrolysis with the unwinding of duplex DNA by translocating in the 3'-5' direction.. The catalysed reaction is ATP + H2O = ADP + phosphate + H(+). A helicase/nuclease that prepares dsDNA breaks (DSB) for recombinational DNA repair. Binds to DSBs and unwinds DNA via a highly rapid and processive ATP-dependent bidirectional helicase activity. Unwinds dsDNA until it encounters a Chi (crossover hotspot instigator) sequence from the 3' direction. Cuts ssDNA a few nucleotides 3' to the Chi site. The properties and activities of the enzyme are changed at Chi. The Chi-altered holoenzyme produces a long 3'-ssDNA overhang and facilitates RecA-binding to the ssDNA for homologous DNA recombination and repair. Holoenzyme degrades any linearized DNA that is unable to undergo homologous recombination. In the holoenzyme this subunit contributes ATPase, 3'-5' helicase, exonuclease activity and loads RecA onto ssDNA. This Borreliella burgdorferi (strain ATCC 35210 / DSM 4680 / CIP 102532 / B31) (Borrelia burgdorferi) protein is RecBCD enzyme subunit RecB.